Reading from the N-terminus, the 324-residue chain is Probable UDP-sugar transporter protein SLC35A4 (324 aa).

Topologically, residues 1–18 (MSVEDGGMPGLGRPRQAR) are cytoplasmic. Residues 19-39 (WTLMLLLSTAMYGAHAPLLAL) form a helical membrane-spanning segment. The Lumenal portion of the chain corresponds to 40 to 52 (CHVDGRVPFRPSS). A helical membrane pass occupies residues 53–73 (AVLLTELTKLLLCAFSLLVGW). Residues 74 to 85 (QAWPQGPPPWRQ) are Cytoplasmic-facing. The helical transmembrane segment at 86 to 106 (AAPFALSALLYGANNNLVIYL) threads the bilayer. Residues 107-142 (QRYMDPSTYQVLSNLKIGSTAVLYCLCLRHRLSVRQ) lie on the Lumenal side of the membrane. The helical transmembrane segment at 143–163 (GLALLLLMAAGACYAAGGLQV) threads the bilayer. The Cytoplasmic portion of the chain corresponds to 164–180 (PGNTLPSPPPAAAASPM). The helical transmembrane segment at 181–201 (PLHITPLGLLLLILYCLISGL) threads the bilayer. The Lumenal portion of the chain corresponds to 202-214 (SSVYTELLMKRQR). A helical membrane pass occupies residues 215-235 (LPLALQNLFLYTFGVLLNLGL). Topologically, residues 236–250 (HAGGGSGPGLLEGFS) are cytoplasmic. Residues 251–271 (GWAALVVLSQALNGLLMSAVM) traverse the membrane as a helical segment. Residues 272–275 (KHGS) lie on the Lumenal side of the membrane. The helical transmembrane segment at 276–298 (SITRLFVVSCSLVVNAVLSAVLL) threads the bilayer. Over 299–324 (RLQLTAAFFLATLLIGLAMRLYYGSR) the chain is Cytoplasmic.

It belongs to the nucleotide-sugar transporter family. SLC35A subfamily. As to quaternary structure, found in a complex with SLC35A2 and SLC35A3.

The protein localises to the golgi apparatus membrane. The catalysed reaction is CDP-L-ribitol(in) + CDP(out) = CDP-L-ribitol(out) + CDP(in). In terms of biological role, mediates the transport of CDP-ribitol. Does not exhibit CMP-sialic acid, UDP-galactose and UDP-N-acetylglucosamine transport activity. The polypeptide is Probable UDP-sugar transporter protein SLC35A4 (Homo sapiens (Human)).